The chain runs to 184 residues: Large ribosomal subunit protein uL6 (184 aa).

The protein belongs to the universal ribosomal protein uL6 family. In terms of assembly, part of the 50S ribosomal subunit.

This protein binds to the 23S rRNA, and is important in its secondary structure. It is located near the subunit interface in the base of the L7/L12 stalk, and near the tRNA binding site of the peptidyltransferase center. This is Large ribosomal subunit protein uL6 from Desulfitobacterium hafniense (strain Y51).